The primary structure comprises 350 residues: MRKLLKPKREVGIVGYGAYVPMYRIKAEEIGRVWGVSSFPIEEKAVPGLDEDALTIGLEAARNALKRAGIDPKLIRAVWFGSESKPYAVKPTGTVIAEAIGATPDVSTADFEFACKAGTEALQTAIGFVGSEMADYAMAIGADTAQGRPGDHLEFTAGAGGAAFIVGPKSSETVAYFEGSYSYVTDTPDFWRRQHEHYPRHGNRFTGEPAYFHHIINAAKTLMEELGLTVNDFDYAVFHQPNVKFPLTVAKILGIPKEKVLPGLLSGTIGNTYSGATMVGVSAVLDIAKPGDRILWVSFGSGAGSDAFSVVVQDAIEEKRNLAPKVKDYVERKKYIDYALYAKARRKYIL.

Glu83 serves as the catalytic Proton donor/acceptor. The active-site Acyl-thioester intermediate is Cys115. Residues Cys115 and Thr156 each contribute to the (3S)-3-hydroxy-3-methylglutaryl-CoA site. Arg204 lines the CoA pocket. Positions 206 and 239 each coordinate (3S)-3-hydroxy-3-methylglutaryl-CoA. His239 serves as the catalytic Proton donor/acceptor. Lys244 is a binding site for CoA. Residues Asn271 and Ser301 each contribute to the (3S)-3-hydroxy-3-methylglutaryl-CoA site.

Belongs to the thiolase-like superfamily. Archaeal HMG-CoA synthase family. Interacts with acetoacetyl-CoA thiolase that catalyzes the precedent step in the pathway and with a DUF35 protein. The acetoacetyl-CoA thiolase/HMG-CoA synthase complex channels the intermediate via a fused CoA-binding site, which allows for efficient coupling of the endergonic thiolase reaction with the exergonic HMGCS reaction.

It carries out the reaction acetoacetyl-CoA + acetyl-CoA + H2O = (3S)-3-hydroxy-3-methylglutaryl-CoA + CoA + H(+). The protein operates within metabolic intermediate biosynthesis; (R)-mevalonate biosynthesis; (R)-mevalonate from acetyl-CoA: step 2/3. In terms of biological role, catalyzes the condensation of acetyl-CoA with acetoacetyl-CoA to form 3-hydroxy-3-methylglutaryl-CoA (HMG-CoA). Functions in the mevalonate (MVA) pathway leading to isopentenyl diphosphate (IPP), a key precursor for the biosynthesis of isoprenoid compounds that are building blocks of archaeal membrane lipids. The protein is Hydroxymethylglutaryl-CoA synthase of Thermococcus gammatolerans (strain DSM 15229 / JCM 11827 / EJ3).